A 209-amino-acid chain; its full sequence is Redox-sensing transcriptional repressor Rex (209 aa).

The segment at residues 16-55 (LYYRFIQNLSLSGKQRVSSAELSEAVKVDSATIRRDFSYF) is a DNA-binding region (H-T-H motif). Residue 90–95 (GVGNLG) participates in NAD(+) binding.

It belongs to the transcriptional regulatory Rex family. As to quaternary structure, homodimer.

It is found in the cytoplasm. Modulates transcription in response to changes in cellular NADH/NAD(+) redox state. In Bacillus cereus (strain ATCC 10987 / NRS 248), this protein is Redox-sensing transcriptional repressor Rex.